A 318-amino-acid chain; its full sequence is Porphobilinogen deaminase (318 aa).

Cysteine 241 is subject to S-(dipyrrolylmethanemethyl)cysteine.

This sequence belongs to the HMBS family. As to quaternary structure, monomer. Requires dipyrromethane as cofactor.

It carries out the reaction 4 porphobilinogen + H2O = hydroxymethylbilane + 4 NH4(+). It participates in porphyrin-containing compound metabolism; protoporphyrin-IX biosynthesis; coproporphyrinogen-III from 5-aminolevulinate: step 2/4. In terms of biological role, tetrapolymerization of the monopyrrole PBG into the hydroxymethylbilane pre-uroporphyrinogen in several discrete steps. This chain is Porphobilinogen deaminase, found in Geotalea uraniireducens (strain Rf4) (Geobacter uraniireducens).